We begin with the raw amino-acid sequence, 215 residues long: Adenylate kinase (215 aa).

10–15 is a binding site for ATP; it reads GAGKGT. The NMP stretch occupies residues 30 to 59; sequence STGDMLRAAVKAGTPIGLKAKAVMEAGELV. AMP-binding positions include T31, R36, 57 to 59, 85 to 88, and Q92; these read ELV and GYPR. Residues 126 to 163 are LID; sequence GRYTCANCGEGYHDRFKQPKVAGVCDVCGSAEFKRRPD. R127 contacts ATP. Positions 130, 133, 150, and 153 each coordinate Zn(2+). Positions 160 and 172 each coordinate AMP. A200 is a binding site for ATP.

This sequence belongs to the adenylate kinase family. In terms of assembly, monomer.

It is found in the cytoplasm. It carries out the reaction AMP + ATP = 2 ADP. The protein operates within purine metabolism; AMP biosynthesis via salvage pathway; AMP from ADP: step 1/1. In terms of biological role, catalyzes the reversible transfer of the terminal phosphate group between ATP and AMP. Plays an important role in cellular energy homeostasis and in adenine nucleotide metabolism. The sequence is that of Adenylate kinase from Rhizorhabdus wittichii (strain DSM 6014 / CCUG 31198 / JCM 15750 / NBRC 105917 / EY 4224 / RW1) (Sphingomonas wittichii).